The primary structure comprises 244 residues: Short-chain dehydrogenase/reductase family member NovK (244 aa).

NADP(+)-binding positions include glycine 9–glutamate 12, glutamate 59–leucine 60, and arginine 154–aspartate 158.

This sequence belongs to the short-chain dehydrogenases/reductases (SDR) family. Heterotetramer; the NovJ(2)K(2) heterotetramer is composed of subunits of 2 NovJ and 2 subunits of NovK.

It participates in antibiotic biosynthesis; novobiocin biosynthesis. Its function is as follows. Non-catalytic subunit of the NovJ(2)K(2) heterotetramer that catalyzes the NADPH-dependent reduction of the tyrosyl moiety of L-beta-OH-Tyr-S-NovH intermediate to yield the tethered beta-ketotyrosyl-S-NovH in the novobiocin biosynthesis pathway. Novobiocin is an aminocoumarin family antibiotic that targets bacterial DNA gyrases. The protein is Short-chain dehydrogenase/reductase family member NovK (novK) of Streptomyces niveus (Streptomyces spheroides).